We begin with the raw amino-acid sequence, 935 residues long: Protocadherin gamma-A11 (935 aa).

An N-terminal signal peptide occupies residues 1-29; that stretch reads MANRLQRGDRSRLLLLLCIFLGTLRGFRA. Cadherin domains lie at 30-134, 135-243, 244-348, 349-453, 454-563, and 571-677; these read RQIR…APSF, QEDE…IPMF, TQSV…APEI, TITS…PPVF, PHSS…APEI, and DGST…ADLG. Over 30 to 693 the chain is Extracellular; it reads RQIRYSVPEE…NSETSDLSLY (664 aa). Asn-48 carries an N-linked (GlcNAc...) asparagine glycan. Asn-255, Asn-266, Asn-420, and Asn-546 each carry an N-linked (GlcNAc...) asparagine glycan. Residues 694–714 traverse the membrane as a helical segment; sequence LVVAVAAVSCIFLVFVIVLLA. Residues 715-935 lie on the Cytoplasmic side of the membrane; the sequence is LRLWRWHKSR…KKKSGKKEKK (221 aa). 2 disordered regions span residues 805-844 and 905-935; these read CDPT…WPNN and ATLT…KEKK. The segment covering 807-844 has biased composition (polar residues); the sequence is PTSNQQAPPNTDWRFSQAQRPGTSGSQNGDDTGTWPNN. The segment covering 925-935 has biased composition (basic residues); sequence NKKKSGKKEKK.

It is found in the cell membrane. Potential calcium-dependent cell-adhesion protein. May be involved in the establishment and maintenance of specific neuronal connections in the brain. The polypeptide is Protocadherin gamma-A11 (PCDHGA11) (Homo sapiens (Human)).